We begin with the raw amino-acid sequence, 333 residues long: Probable endo-beta-1,4-glucanase B (333 aa).

Positions 1–17 (MKFRNLFFAAVAGSAVA) are cleaved as a signal peptide. 2 N-linked (GlcNAc...) asparagine glycosylation sites follow: Asn37 and Asn100. Residue Glu160 is the Proton donor of the active site. Glu267 acts as the Nucleophile in catalysis.

Belongs to the glycosyl hydrolase 5 (cellulase A) family.

The protein resides in the secreted. The enzyme catalyses Endohydrolysis of (1-&gt;4)-beta-D-glucosidic linkages in cellulose, lichenin and cereal beta-D-glucans.. Its function is as follows. Has endoglucanase activity on substrates containing beta-1,4 glycosidic bonds, like in carboxymethylcellulose (CMC), hydroxyethylcellulose (HEC) and beta-glucan. Involved in the degradation of complex natural cellulosic substrates. The protein is Probable endo-beta-1,4-glucanase B (eglB) of Aspergillus oryzae (strain ATCC 42149 / RIB 40) (Yellow koji mold).